A 457-amino-acid polypeptide reads, in one-letter code: Glutamyl-tRNA reductase (457 aa).

Residues 49–52 (TCNR), Ser-109, 114–116 (ETQ), and Gln-120 contribute to the substrate site. Cys-50 serves as the catalytic Nucleophile. Residue 189–194 (GAGKMG) participates in NADP(+) binding.

This sequence belongs to the glutamyl-tRNA reductase family. Homodimer.

The enzyme catalyses (S)-4-amino-5-oxopentanoate + tRNA(Glu) + NADP(+) = L-glutamyl-tRNA(Glu) + NADPH + H(+). The protein operates within porphyrin-containing compound metabolism; protoporphyrin-IX biosynthesis; 5-aminolevulinate from L-glutamyl-tRNA(Glu): step 1/2. Catalyzes the NADPH-dependent reduction of glutamyl-tRNA(Glu) to glutamate 1-semialdehyde (GSA). In Oceanobacillus iheyensis (strain DSM 14371 / CIP 107618 / JCM 11309 / KCTC 3954 / HTE831), this protein is Glutamyl-tRNA reductase.